Reading from the N-terminus, the 542-residue chain is Dihydropyrimidinase (542 aa).

Residues His-62, His-64, and Lys-167 each contribute to the Zn(2+) site. Lys-167 bears the N6-carboxylysine mark. Tyr-172 is a substrate binding site. Zn(2+)-binding residues include His-199 and His-255. Ser-331 lines the substrate pocket. Asp-358 is a Zn(2+) binding site. Asn-392 lines the substrate pocket.

Belongs to the metallo-dependent hydrolases superfamily. Hydantoinase/dihydropyrimidinase family. In terms of assembly, homotetramer. The cofactor is Zn(2+). In terms of processing, carboxylation allows a single lysine to coordinate two zinc ions.

The catalysed reaction is 5,6-dihydrouracil + H2O = 3-(carbamoylamino)propanoate + H(+). Functionally, catalyzes the second step of the reductive pyrimidine degradation, the reversible hydrolytic ring opening of dihydropyrimidines. Can catalyze the ring opening of 5,6-dihydrouracil to N-carbamyl-alanine and of 5,6-dihydrothymine to N-carbamyl-amino isobutyrate. This Lachancea kluyveri (strain ATCC 58438 / CBS 3082 / BCRC 21498 / NBRC 1685 / JCM 7257 / NCYC 543 / NRRL Y-12651) (Yeast) protein is Dihydropyrimidinase (PYD2).